The primary structure comprises 264 residues: Methionine aminopeptidase (264 aa).

H79 contacts substrate. Residues D97, D108, and H171 each contribute to the a divalent metal cation site. H178 contributes to the substrate binding site. A divalent metal cation contacts are provided by E204 and E235.

This sequence belongs to the peptidase M24A family. Methionine aminopeptidase type 1 subfamily. Monomer. It depends on Co(2+) as a cofactor. Zn(2+) is required as a cofactor. Mn(2+) serves as cofactor. Requires Fe(2+) as cofactor.

It carries out the reaction Release of N-terminal amino acids, preferentially methionine, from peptides and arylamides.. Removes the N-terminal methionine from nascent proteins. The N-terminal methionine is often cleaved when the second residue in the primary sequence is small and uncharged (Met-Ala-, Cys, Gly, Pro, Ser, Thr, or Val). Requires deformylation of the N(alpha)-formylated initiator methionine before it can be hydrolyzed. The protein is Methionine aminopeptidase of Escherichia coli O157:H7.